The following is a 1012-amino-acid chain: Tolloid-like protein 2 (1012 aa).

An N-terminal signal peptide occupies residues 1-21 (MPLATTLGTLVLLLLLPLPRG). Positions 22–146 (AEVTGDHSNV…AKTFSARVRR (125 aa)) are excised as a propeptide. The interval 83-135 (KPSIDKPGHDTGGLEETSARWPNDTASNASIQAPRKDGKDATTFLPNPGTSNT) is disordered. Residues 126–135 (FLPNPGTSNT) show a composition bias toward polar residues. One can recognise a Peptidase M12A domain in the interval 146–346 (RATTSRTERI…AQARKLYKCP (201 aa)). Asn-168 carries N-linked (GlcNAc...) asparagine glycosylation. Disulfide bonds link Cys-189/Cys-345, Cys-209/Cys-231, Cys-211/Cys-212, and Cys-348/Cys-374. Position 239 (His-239) interacts with Zn(2+). Glu-240 is a catalytic residue. Positions 243 and 249 each coordinate Zn(2+). CUB domains are found at residues 348–460 (CGET…YEAM) and 461–573 (CGGD…FFKE). Asn-358 and Asn-389 each carry an N-linked (GlcNAc...) asparagine glycan. 12 cysteine pairs are disulfide-bonded: Cys-401/Cys-423, Cys-461/Cys-487, Cys-514/Cys-536, Cys-577/Cys-589, Cys-585/Cys-598, Cys-600/Cys-613, Cys-617/Cys-643, Cys-670/Cys-692, Cys-733/Cys-744, Cys-740/Cys-753, Cys-755/Cys-768, and Cys-773/Cys-799. One can recognise an EGF-like 1; calcium-binding domain in the interval 573–614 (EVDECSWPDHGGCEQRCVNTLGSYTCACDPGYELAADKKTCE). Residues 617-729 (CGGFITKLNG…RGFRAHFFSD (113 aa)) form the CUB 3 domain. Asn-625 carries N-linked (GlcNAc...) asparagine glycosylation. Positions 729-769 (DKDECAKDNGGCQQECVNTFGSYLCRCRNGYRLHENGHDCK) constitute an EGF-like 2; calcium-binding domain. CUB domains lie at 773–885 (CAYK…HSTE) and 886–1002 (CGGR…YTST). N-linked (GlcNAc...) asparagine glycosylation is present at Asn-802. 3 disulfides stabilise this stretch: Cys-826–Cys-848, Cys-886–Cys-916, and Cys-943–Cys-965. Arg-960 and Arg-963 each carry omega-N-methylarginine.

Zn(2+) is required as a cofactor.

It is found in the secreted. Protease which specifically processes pro-lysyl oxidase. Required for the embryonic development. Predominant protease, which in the development, influences dorsal-ventral patterning and skeletogenesis. This chain is Tolloid-like protein 2 (Tll2), found in Mus musculus (Mouse).